We begin with the raw amino-acid sequence, 431 residues long: tRNA(Ile)-lysidine synthase (431 aa).

26–31 serves as a coordination point for ATP; that stretch reads SGGIDS.

Belongs to the tRNA(Ile)-lysidine synthase family.

It is found in the cytoplasm. It catalyses the reaction cytidine(34) in tRNA(Ile2) + L-lysine + ATP = lysidine(34) in tRNA(Ile2) + AMP + diphosphate + H(+). In terms of biological role, ligates lysine onto the cytidine present at position 34 of the AUA codon-specific tRNA(Ile) that contains the anticodon CAU, in an ATP-dependent manner. Cytidine is converted to lysidine, thus changing the amino acid specificity of the tRNA from methionine to isoleucine. The protein is tRNA(Ile)-lysidine synthase of Wolbachia sp. subsp. Brugia malayi (strain TRS).